The primary structure comprises 217 residues: uncharacterized protein (217 aa).

Residues 59–76 (AQSTIQRTSSLPVPSSSN) show a composition bias toward polar residues. 2 disordered regions span residues 59 to 105 (AQST…ETAN) and 124 to 217 (KKSL…HISK). Serine 68 bears the Phosphoserine mark. Position 92 is a phosphothreonine (threonine 92). Residues 124 to 135 (KKSLERRVREEQ) show a composition bias toward basic and acidic residues. Positions 136–147 (EEKTDNEDDNDV) are enriched in acidic residues. The span at 148 to 157 (EISTQESLEN) shows a compositional bias: polar residues. Over residues 173-188 (LEDDIEGQEFSFDDQD) the composition is skewed to acidic residues. Polar residues predominate over residues 199 to 217 (WLSSQKQQGSPLTSDHISK).

This is an uncharacterized protein from Schizosaccharomyces pombe (strain 972 / ATCC 24843) (Fission yeast).